The chain runs to 598 residues: MNELIKHKLELLPDSPGCYLHKDKEGTIIYVGKAKNLKKRVRSYFRGSHDTKTELLVSEIVDFEYIVTESDTEALLLEINLIQKNMPKYNIKLKDDKSYPFLKITNESFPRLVITRYIKKNDGLYFGPYPDSYTANEVKKLLDRIFPFKKCKNPINKVCFYYHLGQCCAHTICHTDKAYWDRLIDDVKHFLNGKDDKIIEDLRSKMLAASEEMAFERAAEYRDLISGIATMRTKQRVMSKDLQDRDIFGYYVDKGWMCVQVFFVRQGKLIQRDVNLFPYYNDAEEDFLTYMGQFYQDKQHFIPKEVFIPEAIDEELVAAIVPTKIIKPKRGEKKQLVALATKNARVSLQQKFDLLEKDIKKTSGAIDNLGHLLGINKPVRIEAFDNSNIQGTSPVAAMVVFVDGKPSKKDYRKFKVKTVVGPDDYASMREVLFRRYSRVKKEGLQAPNLIIVDGGVGQVNVAKDVIEKQLGLTIPVAGLQKNDKHQTHDLLFGNPLEVVPLPRRSEEFFLLHRIQDEVHRFAVTFHRQVRRKNSFSSTLDHISGLGPKRKQLLLRHFKTITAIASATSEEIQALGIPKTVVEAIQQQITDNKNDRSSP.

The region spanning 14–91 (DSPGCYLHKD…IQKNMPKYNI (78 aa)) is the GIY-YIG domain. The UVR domain maps to 196 to 231 (DKIIEDLRSKMLAASEEMAFERAAEYRDLISGIATM).

The protein belongs to the UvrC family. In terms of assembly, interacts with UvrB in an incision complex.

The protein localises to the cytoplasm. Its function is as follows. The UvrABC repair system catalyzes the recognition and processing of DNA lesions. UvrC both incises the 5' and 3' sides of the lesion. The N-terminal half is responsible for the 3' incision and the C-terminal half is responsible for the 5' incision. This Streptococcus pyogenes serotype M18 (strain MGAS8232) protein is UvrABC system protein C.